The primary structure comprises 803 residues: Translation initiation factor IF-2 (803 aa).

Residues proline 65–threonine 75 show a composition bias toward basic and acidic residues. The segment at proline 65 to lysine 186 is disordered. Residues asparagine 175–leucine 185 show a composition bias toward basic residues. One can recognise a tr-type G domain in the interval isoleucine 300–glutamate 468. The tract at residues glycine 309 to threonine 316 is G1. Glycine 309–threonine 316 provides a ligand contact to GTP. Residues glycine 334–histidine 338 form a G2 region. The segment at aspartate 355 to glycine 358 is G3. Residues aspartate 355–histidine 359 and asparagine 409–aspartate 412 each bind GTP. The interval asparagine 409–aspartate 412 is G4. Residues serine 445–lysine 447 form a G5 region.

This sequence belongs to the TRAFAC class translation factor GTPase superfamily. Classic translation factor GTPase family. IF-2 subfamily.

The protein localises to the cytoplasm. In terms of biological role, one of the essential components for the initiation of protein synthesis. Protects formylmethionyl-tRNA from spontaneous hydrolysis and promotes its binding to the 30S ribosomal subunits. Also involved in the hydrolysis of GTP during the formation of the 70S ribosomal complex. The polypeptide is Translation initiation factor IF-2 (Tropheryma whipplei (strain TW08/27) (Whipple's bacillus)).